The primary structure comprises 61 residues: Alpha-conotoxin EIIA (61 aa).

An N-terminal signal peptide occupies residues Met-1–Ser-16. The propeptide occupies Phe-17 to Pro-40. Gln-43 carries the post-translational modification Pyrrolidone carboxylic acid. Pro-45 is subject to Hydroxyproline. Disulfide bonds link Cys-47/Cys-53 and Cys-48/Cys-58. Cys-58 carries the post-translational modification Cysteine amide.

The protein belongs to the conotoxin A superfamily. As to expression, expressed by the venom duct.

It is found in the secreted. Its function is as follows. Alpha-conotoxins bind to the nicotinic acetylcholine receptors (nAChR) and inhibit them. This peptide potently blocks muscular nicotinic acetylcholine receptor (CHRNA1-CHRNB1-CHRNG-CHRND), and has no effect on neuronal receptors. It is able to totally displace [125I]-Bgtx from the Torpedo receptor with a complete inhibition in the high micromolar range. It produces a biphasic inhibition curve which fits nicely with a two-site model (Ki of 0.46 and 105 nM). The chain is Alpha-conotoxin EIIA from Conus ermineus (Agate cone).